The following is a 1035-amino-acid chain: Potassium-transporting ATPase alpha chain 1 (1035 aa).

Residues 1 to 41 (MGKAENYELYSVELGPGPGGDMAAKMSKKKKAGGGGGKRKE) are disordered. The Cytoplasmic segment spans residues 1 to 98 (MGKAENYELY…NALRPPRGTP (98 aa)). A phosphotyrosine mark is found at Y7 and Y10. Basic residues predominate over residues 26–40 (MSKKKKAGGGGGKRK). S27 is subject to Phosphoserine. A helical membrane pass occupies residues 99 to 119 (EYVKFARQLAGGLQCLMWVAA). Topologically, residues 120–142 (AICLIAFAIQASEGDLTTDDNLY) are lumenal. A helical membrane pass occupies residues 143 to 163 (LAIALIAVVVVTGCFGYYQEF). Residues 164 to 299 (KSTNIIASFK…NEKTPIAIEI (136 aa)) are Cytoplasmic-facing. The helical transmembrane segment at 300–319 (EHFVDIIAGLAILFGATFFI) threads the bilayer. Topologically, residues 320–331 (VAMCIGYTFLRA) are lumenal. The helical transmembrane segment at 332–349 (MVFFMAIVVAYVPEGLLA) threads the bilayer. V340, A341, V343, and E345 together coordinate K(+). The Cytoplasmic segment spans residues 350–783 (TVTVCLSLTA…EQGRLIFDNL (434 aa)). D387 functions as the 4-aspartylphosphate intermediate in the catalytic mechanism. Mg(2+)-binding residues include D387 and T389. Residues S463 and S601 each carry the phosphoserine modification. D728 and D732 together coordinate Mg(2+). Residues 784–803 (KKSIAYTLTKNIPELTPYLI) form a helical membrane-spanning segment. Residue E797 coordinates K(+). At 804–813 (YITVSVPLPL) the chain is on the lumenal side. The chain crosses the membrane as a helical span at residues 814-834 (GCITILFIELCTDIFPSVSLA). Residue E822 participates in K(+) binding. Over 835–854 (YEKAESDIMHLRPRNPKRDR) the chain is Cytoplasmic. The residue at position 840 (S840) is a Phosphoserine. The chain crosses the membrane as a helical span at residues 855-877 (LVNEPLAAYSYFQIGAIQSFAGF). Over 878–929 (TDYFTAMAQEGWFPLLCVGLRAQWEDHHLQDLQDSYGQEWTFGQRLYQQYTC) the chain is Lumenal. A helical transmembrane segment spans residues 930 to 949 (YTVFFISIEVCQIADVLIRK). At 950–963 (TRRLSAFQQGFFRN) the chain is on the cytoplasmic side. Phosphoserine; by PKA is present on S954. A helical membrane pass occupies residues 964 to 982 (KILVIAIVFQVCIGCFLCY). At 983 to 997 (CPGMPNIFNFMPIRF) the chain is on the lumenal side. The helical transmembrane segment at 998–1018 (QWWLVPLPYGILIFVYDEIRK) threads the bilayer. The Cytoplasmic segment spans residues 1019-1035 (LGVRCCPGSWWDQELYY).

This sequence belongs to the cation transport ATPase (P-type) (TC 3.A.3) family. Type IIC subfamily. As to quaternary structure, the gastric H(+)/K(+) ATPase pump is composed of the catalytic alpha subunit ATP4A and the regulatory beta subunit ATP4B. Interacts (via the P-domain) with ATP4B (via N-terminus); this interaction stabilizes the lumenal-open E2 conformation state and prevents the reverse reaction of the transport cycle. Expressed in gastric parietal cells (at protein level).

It is found in the apical cell membrane. The catalysed reaction is K(+)(out) + ATP + H2O + H(+)(in) = K(+)(in) + ADP + phosphate + 2 H(+)(out). Its function is as follows. The catalytic subunit of the gastric H(+)/K(+) ATPase pump which transports H(+) ions in exchange for K(+) ions across the apical membrane of parietal cells. Uses ATP as an energy source to pump H(+) ions to the gastric lumen while transporting K(+) ion from the lumen into the cell. Remarkably generates a million-fold proton gradient across the gastric parietal cell membrane, acidifying the gastric juice down to pH 1. Within a transport cycle, the transfer of a H(+) ion across the membrane is coupled to ATP hydrolysis and is associated with a transient phosphorylation that shifts the pump conformation from inward-facing (E1) to outward-facing state (E2). The release of the H(+) ion in the stomach lumen is followed by binding of K(+) ion converting the pump conformation back to the E1 state. This Homo sapiens (Human) protein is Potassium-transporting ATPase alpha chain 1.